The sequence spans 60 residues: UPF0434 protein NMCC_0628 (60 aa).

Belongs to the UPF0434 family.

This chain is UPF0434 protein NMCC_0628, found in Neisseria meningitidis serogroup C (strain 053442).